A 313-amino-acid polypeptide reads, in one-letter code: 4-diphosphocytidyl-2-C-methyl-D-erythritol kinase (313 aa).

Lysine 27 is a catalytic residue. 110–120 (PIGGGVGGGSS) contacts ATP. The active site involves aspartate 152.

It belongs to the GHMP kinase family. IspE subfamily.

It catalyses the reaction 4-CDP-2-C-methyl-D-erythritol + ATP = 4-CDP-2-C-methyl-D-erythritol 2-phosphate + ADP + H(+). The protein operates within isoprenoid biosynthesis; isopentenyl diphosphate biosynthesis via DXP pathway; isopentenyl diphosphate from 1-deoxy-D-xylulose 5-phosphate: step 3/6. In terms of biological role, catalyzes the phosphorylation of the position 2 hydroxy group of 4-diphosphocytidyl-2C-methyl-D-erythritol. The sequence is that of 4-diphosphocytidyl-2-C-methyl-D-erythritol kinase from Histophilus somni (strain 2336) (Haemophilus somnus).